We begin with the raw amino-acid sequence, 930 residues long: Isoleucine--tRNA ligase (930 aa).

Positions 57–67 (PYANGNIHVGH) match the 'HIGH' region motif. Glutamate 554 lines the L-isoleucyl-5'-AMP pocket. The 'KMSKS' region motif lies at 595-599 (KMSKS). Position 598 (lysine 598) interacts with ATP. 4 residues coordinate Zn(2+): cysteine 888, cysteine 891, cysteine 908, and cysteine 911.

It belongs to the class-I aminoacyl-tRNA synthetase family. IleS type 1 subfamily. As to quaternary structure, monomer. Zn(2+) is required as a cofactor.

Its subcellular location is the cytoplasm. The catalysed reaction is tRNA(Ile) + L-isoleucine + ATP = L-isoleucyl-tRNA(Ile) + AMP + diphosphate. Catalyzes the attachment of isoleucine to tRNA(Ile). As IleRS can inadvertently accommodate and process structurally similar amino acids such as valine, to avoid such errors it has two additional distinct tRNA(Ile)-dependent editing activities. One activity is designated as 'pretransfer' editing and involves the hydrolysis of activated Val-AMP. The other activity is designated 'posttransfer' editing and involves deacylation of mischarged Val-tRNA(Ile). The protein is Isoleucine--tRNA ligase of Streptococcus pneumoniae (strain ATCC 700669 / Spain 23F-1).